The chain runs to 182 residues: Type-1 fimbrial protein, A chain (182 aa).

Positions 1–23 (MKIKTLAIVVLSALSLSSTAALA) are cleaved as a signal peptide. Cysteines 44 and 84 form a disulfide.

It belongs to the fimbrial protein family.

It is found in the fimbrium. Fimbriae (also called pili), polar filaments radiating from the surface of the bacterium to a length of 0.5-1.5 micrometers and numbering 100-300 per cell, enable bacteria to colonize the epithelium of specific host organs. The chain is Type-1 fimbrial protein, A chain (fimA) from Escherichia coli (strain K12).